The following is a 971-amino-acid chain: Kinesin-like protein KIN-14C (971 aa).

The Calponin-homology (CH) domain occupies 14–119; sequence ANRRAEVIDW…CLLALKDNVA (106 aa). The stretch at 272-357 forms a coiled coil; the sequence is IKALETLVNG…QMETKARQME (86 aa). Positions 472–799 constitute a Kinesin motor domain; the sequence is NIRVYCRVRP…LKFAERVSGV (328 aa). Residue 556-563 participates in ATP binding; it reads GQTGSGKT. Residues 809-844 are a coiled coil; the sequence is EGKDIKELLEQVASLKDTIARKDMEIEQLQLLKSKS. The span at 839–881 shows a compositional bias: polar residues; it reads LLKSKSPNSMTDRNGSNLLRQSTSSTGLSSLPVASQQNQQLSG. A disordered region spans residues 839 to 971; it reads LLKSKSPNSM…GSLAKPSKRR (133 aa).

Belongs to the TRAFAC class myosin-kinesin ATPase superfamily. Kinesin family. KIN-14 subfamily.

The sequence is that of Kinesin-like protein KIN-14C from Oryza sativa subsp. japonica (Rice).